We begin with the raw amino-acid sequence, 247 residues long: Chymase (247 aa).

An N-terminal signal peptide occupies residues 1 to 17 (MCLLSLPLLLFLQYTRA). The propeptide at 18-21 (KAGE) is activation peptide. The Peptidase S1 domain occupies 22 to 245 (VIGGTECKPH…YRPWINKILK (224 aa)). Cys51 and Cys67 are disulfide-bonded. His66 acts as the Charge relay system in catalysis. Asn103 carries an N-linked (GlcNAc...) asparagine glycan. The Charge relay system role is filled by Asp110. Asn121 carries N-linked (GlcNAc...) asparagine glycosylation. 2 disulfide bridges follow: Cys144–Cys209 and Cys175–Cys188. The active-site Charge relay system is Ser203.

The protein belongs to the peptidase S1 family. Granzyme subfamily.

The protein resides in the secreted. Its subcellular location is the cytoplasmic granule. The enzyme catalyses Preferential cleavage: Phe-|-Xaa &gt; Tyr-|-Xaa &gt; Trp-|-Xaa &gt; Leu-|-Xaa.. Major secreted protease of mast cells with suspected roles in vasoactive peptide generation, extracellular matrix degradation, and regulation of gland secretion. The polypeptide is Chymase (Cavia porcellus (Guinea pig)).